Here is a 120-residue protein sequence, read N- to C-terminus: Ribonuclease P protein component (120 aa).

Belongs to the RnpA family. As to quaternary structure, consists of a catalytic RNA component (M1 or rnpB) and a protein subunit.

The catalysed reaction is Endonucleolytic cleavage of RNA, removing 5'-extranucleotides from tRNA precursor.. RNaseP catalyzes the removal of the 5'-leader sequence from pre-tRNA to produce the mature 5'-terminus. It can also cleave other RNA substrates such as 4.5S RNA. The protein component plays an auxiliary but essential role in vivo by binding to the 5'-leader sequence and broadening the substrate specificity of the ribozyme. In Mycobacterium marinum (strain ATCC BAA-535 / M), this protein is Ribonuclease P protein component.